A 350-amino-acid polypeptide reads, in one-letter code: Protein RecA (350 aa).

Gly-67–Thr-74 contacts ATP.

It belongs to the RecA family.

Its subcellular location is the cytoplasm. Functionally, can catalyze the hydrolysis of ATP in the presence of single-stranded DNA, the ATP-dependent uptake of single-stranded DNA by duplex DNA, and the ATP-dependent hybridization of homologous single-stranded DNAs. It interacts with LexA causing its activation and leading to its autocatalytic cleavage. The polypeptide is Protein RecA (Baumannia cicadellinicola subsp. Homalodisca coagulata).